The sequence spans 303 residues: Putative S-adenosyl-L-methionine-dependent methyltransferase SCO6443 (303 aa).

Residues D130 and 159–160 each bind S-adenosyl-L-methionine; that span reads DL.

It belongs to the UPF0677 family.

Its function is as follows. Exhibits S-adenosyl-L-methionine-dependent methyltransferase activity. This Streptomyces coelicolor (strain ATCC BAA-471 / A3(2) / M145) protein is Putative S-adenosyl-L-methionine-dependent methyltransferase SCO6443.